Consider the following 268-residue polypeptide: Phosphonates import ATP-binding protein PhnC (268 aa).

An ABC transporter domain is found at 11–254 (LHAEAVTKRF…EVMAIYQRAE (244 aa)). 43–50 (GLSGSGKS) is an ATP binding site.

This sequence belongs to the ABC transporter superfamily. Phosphonates importer (TC 3.A.1.9.1) family. In terms of assembly, the complex is composed of two ATP-binding proteins (PhnC), two transmembrane proteins (PhnE) and a solute-binding protein (PhnD).

It is found in the cell membrane. It carries out the reaction phosphonate(out) + ATP + H2O = phosphonate(in) + ADP + phosphate + H(+). In terms of biological role, part of the ABC transporter complex PhnCDE involved in phosphonates import. Responsible for energy coupling to the transport system. This Nocardia farcinica (strain IFM 10152) protein is Phosphonates import ATP-binding protein PhnC.